A 606-amino-acid polypeptide reads, in one-letter code: MSDSKMDKLARMAPLPRTPLLTIWLAINMALIAQETGHKRIHTVQAATGGGSMLGDVNISAILDSFSVSYDKRVRPNYGGPPVEVGVTMYVLSISSLSEVKMDFTLDFYFRQFWTDPRLAYRKRPGVETLSVGSEFIKNIWVPDTFFVNEKQSYFHIATTSNEFIRVHHSGSITRSIRLTITASCPMNLQYFPMDRQLCHIEIESFGYTMRDIRYKWNEGPNSVGVSSEVSLPQFKVLGHRQRAMEISLTTGNYSRLACEIQFVRSMGYYLIQIYIPSGLIVIISWVSFWLNRNATPARVALGVTTVLTMTTLMSSTNAALPKISYVKSIDVYLGTCFVMVFASLLEYATVGYMAKRIQMRKQRFMAIQKIAEQKKQQLDGANQQQANPNPNANVGGPGGVGVGPGGPGGPGGGVNVGVGMGMGPEHGHGHGHHAHSHGHPHAPKQTVSNRPIGFSNIQQNVGTRGCSIVGPLFQEVRFKVHDPKAHSKGGTLENTVNGGRGGPQSHGPGPGQGGGPPGGGGGGGGGGGPPEGGGDPEAAVPAHLLHPGKVKKDINKLLGITPSDIDKYSRIVFPVCFVCFNLMYWIIYLHVSDVVADDLVLLGEE.

The first 44 residues, 1 to 44, serve as a signal peptide directing secretion; the sequence is MSDSKMDKLARMAPLPRTPLLTIWLAINMALIAQETGHKRIHTV. Residues 45–268 lie on the Extracellular side of the membrane; the sequence is QAATGGGSML…CEIQFVRSMG (224 aa). N-linked (GlcNAc...) asparagine glycosylation is present at Asn-58. Cysteines 185 and 199 form a disulfide. N-linked (GlcNAc...) asparagine glycosylation is present at Asn-253. The next 3 membrane-spanning stretches (helical) occupy residues 269-291, 297-316, and 333-356; these read YYLI…SFWL, PARV…LMSS, and YLGT…YMAK. Topologically, residues 357-568 are cytoplasmic; the sequence is RIQMRKQRFM…LGITPSDIDK (212 aa). Disordered regions lie at residues 376–451 and 482–542; these read KQQL…VSNR and HDPK…AAVP. Residues 381-395 show a composition bias toward low complexity; the sequence is GANQQQANPNPNANV. Gly residues predominate over residues 396–425; it reads GGPGGVGVGPGGPGGPGGGVNVGVGMGMGP. Positions 430 to 443 are enriched in basic residues; it reads GHGHHAHSHGHPHA. A compositionally biased stretch (gly residues) spans 499–536; it reads GGRGGPQSHGPGPGQGGGPPGGGGGGGGGGGPPEGGGD. Residues 569 to 590 traverse the membrane as a helical segment; the sequence is YSRIVFPVCFVCFNLMYWIIYL.

The protein belongs to the ligand-gated ion channel (TC 1.A.9) family. Gamma-aminobutyric acid receptor (TC 1.A.9.5) subfamily. Forms oligomers. Interacts with Nlg4; the interaction mediates Rdl clustering. Interacts with Fbxl4; the interaction mediates Rdl degradation. Expressed in different parts of the brain: the mushroom bodies (alpha, alpha', beta, beta', gamma lobes and peduncles), the neurons projecting to the columnar-type neuron LC9 optic glomerulus, in interneurons connecting the paired olfactory lobes, antennal lobes, PDF-expressing small and large ventral lateral neurons (LNvs) of the circadian clock and lobula columnar neuron 11 (LC11) (at protein level). Expressed in all major ON pathway medulla neurons (Mi1, Tm3, Mi4, and Mi9) and in OFF pathway neurons (Tm1, Tm2, Tm4, and Tm9).

It is found in the cell membrane. The protein resides in the postsynaptic cell membrane. It localises to the cell projection. The protein localises to the dendrite. Its subcellular location is the axon. Activated by agonist muscimol. Insensitive to zinc, glycine, glutamate, and baclofen, loreclezole, to antagonist bicuculline, glycine-receptor antagonist strychnine, and nonselective GABA and glycine antagonist RU 5135. Insensitive to flunitrazepam, pentobarbitone or pregnane steroids such as 5alpha-pregnan-3alpha-ol-20-one. Inhibited by insecticides picrotoxin (PTX), cyclodiene dieldrin, TBPS and lindane. Inhibited by ivermectin, fipronil and pyrafluprole. Its activity is regulated as follows. Inhibited by insecticides picrotoxin (PTX). Gamma-aminobutyric acid (GABA) receptor voltage channel subunit. GABA, an inhibitory neurotransmitter, mediates neuronal inhibition by binding to the GABA receptor and opening an integral chloride channel. Together with glutamate receptor GluClalpha, plays an important role in the visual response by regulating the activity of ON/OFF-selective neurons. Plays a role in promoting sleep and sleep latency by regulating the activity of peptidergic PDF neurons. In large ventral lateral clock neurons, clustering is mediated by Nlg4 and protein levels undergo daily degradation in response to the circadian clock. In neurons in the mushroom bodies, has a role in odor memory acquisition where it inhibits appetitive and aversive olfactory learning, probably upstream of Adcy1/adenylate cyclase 1 and GTPase activating protein Nf1. In male-specific GABAergic neurons, plays a role in inhibiting male aggressive behavior during courtship. Functionally, gamma-aminobutyric acid (GABA) receptor voltage channel subunit. This chain is Gamma-aminobutyric acid receptor subunit beta (Rdl), found in Drosophila melanogaster (Fruit fly).